An 862-amino-acid chain; its full sequence is Glucans biosynthesis glucosyltransferase H (862 aa).

A disordered region spans residues 1-25 (MELPATSGLNAQPGNAEGTTASTRP). Polar residues predominate over residues 7–25 (SGLNAQPGNAEGTTASTRP). Transmembrane regions (helical) follow at residues 188-210 (RLTL…SSVL), 545-567 (GVMA…ALLA), 597-619 (ALFS…VLWA), 626-648 (GGAV…AAPV), and 708-730 (FLWW…VFSS).

It belongs to the glycosyltransferase 2 family. OpgH subfamily.

The protein localises to the cell inner membrane. The protein operates within glycan metabolism; osmoregulated periplasmic glucan (OPG) biosynthesis. Involved in the biosynthesis of osmoregulated periplasmic glucans (OPGs). This is Glucans biosynthesis glucosyltransferase H from Ralstonia nicotianae (strain ATCC BAA-1114 / GMI1000) (Ralstonia solanacearum).